Here is a 124-residue protein sequence, read N- to C-terminus: Small ribosomal subunit protein uS12 (124 aa).

Position 89 is a 3-methylthioaspartic acid (Asp-89).

This sequence belongs to the universal ribosomal protein uS12 family. Part of the 30S ribosomal subunit. Contacts proteins S8 and S17. May interact with IF1 in the 30S initiation complex.

Its function is as follows. With S4 and S5 plays an important role in translational accuracy. Functionally, interacts with and stabilizes bases of the 16S rRNA that are involved in tRNA selection in the A site and with the mRNA backbone. Located at the interface of the 30S and 50S subunits, it traverses the body of the 30S subunit contacting proteins on the other side and probably holding the rRNA structure together. The combined cluster of proteins S8, S12 and S17 appears to hold together the shoulder and platform of the 30S subunit. This is Small ribosomal subunit protein uS12 from Shewanella loihica (strain ATCC BAA-1088 / PV-4).